The chain runs to 311 residues: Manganese-dependent ADP-ribose/CDP-alcohol diphosphatase (311 aa).

The Zn(2+) site is built by Asp-17, Gln-19, Asp-64, Asn-99, His-218, His-255, and His-257.

Belongs to the ADPRibase-Mn family. As to quaternary structure, monomer. The cofactor is Mg(2+).

It catalyses the reaction CDP-choline + H2O = phosphocholine + CMP + 2 H(+). The enzyme catalyses ADP-D-ribose + H2O = D-ribose 5-phosphate + AMP + 2 H(+). It carries out the reaction CDP-glycerol + H2O = sn-glycerol 3-phosphate + CMP + 2 H(+). Functionally, hydrolyzes ADP-ribose, IDP-ribose, CDP-glycerol, CDP-choline and CDP-ethanolamine, but not other non-reducing ADP-sugars or CDP-glucose. This Arabidopsis thaliana (Mouse-ear cress) protein is Manganese-dependent ADP-ribose/CDP-alcohol diphosphatase.